Reading from the N-terminus, the 152-residue chain is Putative RRN3-like protein RRN3P1 (152 aa).

It belongs to the RRN3 family.

This Homo sapiens (Human) protein is Putative RRN3-like protein RRN3P1 (RRN3P1).